A 124-amino-acid polypeptide reads, in one-letter code: Fluoride-specific ion channel FluC (124 aa).

The next 3 helical transmembrane spans lie at 5–27, 70–90, and 95–115; these read LFVA…FMLQ, VGLL…LLLI, and WIKA…MVYL. Positions 74 and 77 each coordinate Na(+).

Belongs to the fluoride channel Fluc/FEX (TC 1.A.43) family.

Its subcellular location is the cell inner membrane. The enzyme catalyses fluoride(in) = fluoride(out). Its activity is regulated as follows. Na(+) is not transported, but it plays an essential structural role and its presence is essential for fluoride channel function. Fluoride-specific ion channel. Important for reducing fluoride concentration in the cell, thus reducing its toxicity. The protein is Fluoride-specific ion channel FluC of Shewanella sediminis (strain HAW-EB3).